A 129-amino-acid polypeptide reads, in one-letter code: Large ribosomal subunit protein uL22 (129 aa).

The protein belongs to the universal ribosomal protein uL22 family. Part of the 50S ribosomal subunit.

Its function is as follows. This protein binds specifically to 23S rRNA; its binding is stimulated by other ribosomal proteins, e.g. L4, L17, and L20. It is important during the early stages of 50S assembly. It makes multiple contacts with different domains of the 23S rRNA in the assembled 50S subunit and ribosome. Functionally, the globular domain of the protein is located near the polypeptide exit tunnel on the outside of the subunit, while an extended beta-hairpin is found that lines the wall of the exit tunnel in the center of the 70S ribosome. This is Large ribosomal subunit protein uL22 from Sinorhizobium medicae (strain WSM419) (Ensifer medicae).